Consider the following 472-residue polypeptide: WASH complex subunit 1 (472 aa).

A required for WASH complex assembly region spans residues 1–51 (MPQNRSMESQAYSLPLILPDLRREEAIHQITDTLQHLQTVSNDIFSRILQR). Disordered regions lie at residues 289 to 365 (ENSR…SDGR), 377 to 412 (GIGK…GDLM), and 426 to 472 (ISGK…DWES). Composition is skewed to pro residues over residues 301–319 (LPPP…PPEP) and 327–336 (SLAPPLPIPA). Positions 352–472 (QGAPKEVVNP…GDGDEEDWES (121 aa)) are VCA. The WH2 domain maps to 364-386 (GRASLLESIRQAGGIGKAKLRNV). Positions 385-401 (NVKEKKLEKKKMKEQEQ) are enriched in basic and acidic residues.

This sequence belongs to the WASH1 family. As to quaternary structure, component of the WASH complex.

The protein resides in the early endosome membrane. It localises to the recycling endosome membrane. Functionally, acts as a nucleation-promoting factor at the surface of endosomes, where it recruits and activates the Arp2/3 complex to induce actin polymerization, playing a key role in the fission of tubules that serve as transport intermediates during endosome sorting. This is WASH complex subunit 1 from Xenopus tropicalis (Western clawed frog).